A 41-amino-acid polypeptide reads, in one-letter code: Entericidin A (41 aa).

Residues 1–18 form the signal peptide; it reads MMKRLIVLVLLASTLLTG. Cys-19 carries N-palmitoyl cysteine lipidation. Cys-19 is lipidated: S-diacylglycerol cysteine.

It belongs to the EcnA/EcnB lipoprotein family.

The protein localises to the cell membrane. Its function is as follows. Acts as antidote to the effect of entericidin B. This is Entericidin A (ecnA) from Escherichia coli O157:H7.